Consider the following 528-residue polypeptide: Pentatricopeptide repeat-containing protein At1g62914, mitochondrial (528 aa).

Residues 1-20 constitute a mitochondrion transit peptide; it reads MLAKISSSAKRFVHRSLVVR. PPR repeat units lie at residues 77–111, 112–146, 147–181, 182–216, 217–251, 252–286, 287–321, 322–356, 357–391, 392–426, 427–461, 462–496, and 497–528; these read SIIE…GISH, NLYT…GYEP, DIVT…GYKP, DTVT…GCQP, DLVT…KIEA, NVVI…GVRP, NVIT…KINP, NLVT…SIDP, NIFT…DCLP, NVVT…GLVG, NTVT…GVHP, NILT…TMEP, and DIYT…ALKE.

The protein belongs to the PPR family. P subfamily.

Its subcellular location is the mitochondrion. The sequence is that of Pentatricopeptide repeat-containing protein At1g62914, mitochondrial from Arabidopsis thaliana (Mouse-ear cress).